The primary structure comprises 316 residues: MTRKVKAAIIGSGNIGTDLMIKILRHGQHIEMGAMVGIDPASDGLARAQRMGVAITHEGVEGLTRLPVFNEIDVVFDATSAGAHVKNEALLRERKPGLRMIDLTPAAIGPYCIPVVNGDDHLDATNVNMVTCGGQATIPMVAAVSRVAKVHYAEIIASISSKSAGPGTRANIDEFTETTSKAIEVVGGAAKGKAIIVLNPAEPPLMMRDTVYTLSDFADIDQIEESVQRMADAVQAYVPGYRLKQRVQFDRIEADCPIRIPGVGDRMNGLKTSIFLEVEGAAHYLPAYAGNLDIMTSAALRTAEKLAERLLASLVA.

Position 12–15 (12–15 (SGNI)) interacts with NAD(+). Residue Cys132 is the Acyl-thioester intermediate of the active site. NAD(+) is bound by residues 163–171 (SAGPGTRAN) and Asn291.

The protein belongs to the acetaldehyde dehydrogenase family.

The catalysed reaction is acetaldehyde + NAD(+) + CoA = acetyl-CoA + NADH + H(+). The polypeptide is Acetaldehyde dehydrogenase 1 (Pseudomonas putida (strain ATCC 700007 / DSM 6899 / JCM 31910 / BCRC 17059 / LMG 24140 / F1)).